Reading from the N-terminus, the 164-residue chain is Urease subunit beta (164 aa).

Composition is skewed to polar residues over residues 1–10 (MSTKTNSTKA) and 20–32 (TNRG…GYSE). Positions 1–32 (MSTKTNSTKATSEKTDSLKTNRGTKSSAGYSE) are disordered.

The protein belongs to the urease beta subunit family. As to quaternary structure, heterotrimer of UreA (gamma), UreB (beta) and UreC (alpha) subunits. Three heterotrimers associate to form the active enzyme.

The protein resides in the cytoplasm. The enzyme catalyses urea + 2 H2O + H(+) = hydrogencarbonate + 2 NH4(+). It participates in nitrogen metabolism; urea degradation; CO(2) and NH(3) from urea (urease route): step 1/1. This is Urease subunit beta from Yersinia enterocolitica serotype O:8 / biotype 1B (strain NCTC 13174 / 8081).